The primary structure comprises 203 residues: Guanylate kinase (203 aa).

The Guanylate kinase-like domain maps to 3–181 (GTLYIVSAPS…ALDDLKAIFR (179 aa)). ATP is bound at residue 10-17 (APSGAGKT).

Belongs to the guanylate kinase family.

Its subcellular location is the cytoplasm. It carries out the reaction GMP + ATP = GDP + ADP. Functionally, essential for recycling GMP and indirectly, cGMP. The protein is Guanylate kinase (gmk) of Pseudomonas aeruginosa (strain ATCC 15692 / DSM 22644 / CIP 104116 / JCM 14847 / LMG 12228 / 1C / PRS 101 / PAO1).